Consider the following 117-residue polypeptide: Large ribosomal subunit protein uL18 (117 aa).

It belongs to the universal ribosomal protein uL18 family. In terms of assembly, part of the 50S ribosomal subunit; part of the 5S rRNA/L5/L18/L25 subcomplex. Contacts the 5S and 23S rRNAs.

Its function is as follows. This is one of the proteins that bind and probably mediate the attachment of the 5S RNA into the large ribosomal subunit, where it forms part of the central protuberance. This Francisella tularensis subsp. novicida (strain U112) protein is Large ribosomal subunit protein uL18.